Here is a 200-residue protein sequence, read N- to C-terminus: Guanylate kinase (200 aa).

Positions 6-184 (GLLIVLSGPS…AVDKLKSILL (179 aa)) constitute a Guanylate kinase-like domain. ATP is bound at residue 13–20 (GPSGAGKG).

It belongs to the guanylate kinase family.

It localises to the cytoplasm. The catalysed reaction is GMP + ATP = GDP + ADP. Its function is as follows. Essential for recycling GMP and indirectly, cGMP. The polypeptide is Guanylate kinase (Desulfitobacterium hafniense (strain Y51)).